A 179-amino-acid polypeptide reads, in one-letter code: UPF0316 protein Ping_1367 (179 aa).

2 helical membrane passes run 28–48 and 55–75; these read FLAS…SAQV and WYLA…GISI.

This sequence belongs to the UPF0316 family.

The protein localises to the cell membrane. This is UPF0316 protein Ping_1367 from Psychromonas ingrahamii (strain DSM 17664 / CCUG 51855 / 37).